Reading from the N-terminus, the 435-residue chain is Tyrosine-protein phosphatase non-receptor type 1 (435 aa).

N-acetylmethionine is present on M1. The region spanning 3 to 277 (MEKEFEQIDK…RFSYLAVIEG (275 aa)) is the Tyrosine-protein phosphatase domain. Y20 is modified (phosphotyrosine). S50 carries the phosphoserine; by PKB/AKT1, CLK1 and CLK2 modification. At Y66 the chain carries Phosphotyrosine; by EGFR. Substrate contacts are provided by residues D181 and 215 to 221 (CSAGIGR). The active-site Phosphocysteine intermediate is C215. The residue at position 215 (C215) is a Cysteine persulfide; alternate. C215 carries the cysteine sulfenic acid (-SOH); alternate modification. C215 is subject to Cysteine sulfinic acid (-SO2H); alternate. Position 215 is an S-nitrosocysteine; in reversibly inhibited form (C215). A cross-link (n,N-(cysteine-1,S-diyl)serine (Cys-Ser); in inhibited form) is located at residues 215-216 (CS). Phosphoserine; by CLK1 and CLK2 occurs at positions 242 and 243. Q262 provides a ligand contact to substrate. The span at 338 to 351 (TQEDKDCPIKEEKG) shows a compositional bias: basic and acidic residues. The segment at 338–359 (TQEDKDCPIKEEKGSPLNAAPY) is disordered. 3 positions are modified to phosphoserine: S352, S363, and S365. At T368 the chain carries Phosphothreonine. S378 is modified (phosphoserine; by PKC). The disordered stretch occupies residues 378-398 (SLRGAQAASPAKGEPSLPEKD). The residue at position 386 (S386) is a Phosphoserine; by CDK1.

The protein belongs to the protein-tyrosine phosphatase family. Non-receptor class 1 subfamily. In terms of assembly, interacts with EPHA3 (phosphorylated); dephosphorylates EPHA3 and may regulate its trafficking and function. Interacts with MET. Interacts with NCK1. In terms of processing, oxidized on Cys-215; the Cys-SOH formed in response to redox signaling reacts with the alpha-amido of the following residue to form a sulfenamide cross-link, triggering a conformational change that inhibits substrate binding and activity. The active site can be restored by reduction. Post-translationally, ser-50 is the major site of phosphorylation as compared to Ser-242 and Ser-243. Activated by phosphorylation at Ser-50. S-nitrosylation of Cys-215 inactivates the enzyme activity. In terms of processing, sulfhydration at Cys-215 following endoplasmic reticulum stress inactivates the enzyme activity, promoting EIF2AK3/PERK activity. In terms of tissue distribution, expressed in keratinocytes (at protein level).

It localises to the endoplasmic reticulum membrane. The enzyme catalyses O-phospho-L-tyrosyl-[protein] + H2O = L-tyrosyl-[protein] + phosphate. Tyrosine-protein phosphatase which acts as a regulator of endoplasmic reticulum unfolded protein response. Mediates dephosphorylation of EIF2AK3/PERK; inactivating the protein kinase activity of EIF2AK3/PERK. May play an important role in CKII- and p60c-src-induced signal transduction cascades. May regulate the EFNA5-EPHA3 signaling pathway which modulates cell reorganization and cell-cell repulsion. May also regulate the hepatocyte growth factor receptor signaling pathway through dephosphorylation of MET. This chain is Tyrosine-protein phosphatase non-receptor type 1 (PTPN1), found in Homo sapiens (Human).